Here is a 346-residue protein sequence, read N- to C-terminus: Putative F-box/kelch-repeat protein At1g27420 (346 aa).

Residues 9–56 (PIIPGLTDDVAELCVSKIPRSSFQITSQVCRRWRSFLRSQHFAAVRKL) enclose the F-box domain. 5 Kelch repeats span residues 62 to 109 (EFLC…VLDG), 111 to 167 (KIVF…EVNG), 168 to 215 (LLYV…AFSS), 217 to 257 (LYAV…VRNK), and 259 to 300 (YFMD…VWNN).

This Arabidopsis thaliana (Mouse-ear cress) protein is Putative F-box/kelch-repeat protein At1g27420.